A 565-amino-acid polypeptide reads, in one-letter code: NAD-dependent malic enzyme (565 aa).

Catalysis depends on tyrosine 104, which acts as the Proton donor. Arginine 157 contributes to the NAD(+) binding site. The active-site Proton acceptor is the lysine 175. Glutamate 246, aspartate 247, and aspartate 270 together coordinate a divalent metal cation. NAD(+)-binding residues include aspartate 270 and asparagine 418.

Belongs to the malic enzymes family. Homotetramer. The cofactor is Mg(2+). Mn(2+) serves as cofactor.

The catalysed reaction is (S)-malate + NAD(+) = pyruvate + CO2 + NADH. It carries out the reaction oxaloacetate + H(+) = pyruvate + CO2. This Proteus mirabilis (strain HI4320) protein is NAD-dependent malic enzyme.